Here is an 85-residue protein sequence, read N- to C-terminus: COMM domain-containing protein 6 (85 aa).

Met-1 carries the post-translational modification N-acetylmethionine. In terms of domain architecture, COMM spans 18 to 85 (QLVDFQWKLG…KEIAAVIETV (68 aa)).

Belongs to the COMM domain-containing protein 6 family. As to quaternary structure, component of the commander complex consisting of the CCC subcomplex and the retriever subcomplex. Component of the CCC (COMMD/CCDC22/CCDC93) subcomplex consisting of COMMD1, COMMD2, COMMD3, COMMD4, COMMD5, COMMD6, COMMD7, COMMD8, COMMD9, COMMD10, CCDC22 and CCDC93; within the complex forms a heterodimer with COMMD1. May form a homodimer with isoform 1. Interacts with RELA, RELB, NFKB1/p105. Does not interact with NFKBIB. Interacts with CCDC22, CCDC93, SCNN1B, CUL4A. Ubiquitous. Expressed in brain, heart, skeletal muscle, lung, pancreas, liver, kidney, small intestine and placenta.

Its subcellular location is the nucleus. The protein resides in the cytoplasm. In terms of biological role, scaffold protein in the commander complex that is essential for endosomal recycling of transmembrane cargos; the commander complex is composed of the CCC subcomplex and the retriever subcomplex. May modulate activity of cullin-RING E3 ubiquitin ligase (CRL) complexes. Down-regulates activation of NF-kappa-B. Inhibits TNF-induced NFKB1 activation. This chain is COMM domain-containing protein 6 (COMMD6), found in Homo sapiens (Human).